A 142-amino-acid chain; its full sequence is MQHARKKFRVGRTSAHNRCMLANMLKSLIHQERIETTLPKAKELRRHADKMITLAKKNTLAARRLAVARLMIRYNKLTSKEARQAKGGDLSVYNVDRKVINKLFDELGSRFVSRNGGYTRILKMQNRVGDNARKCIIEFLAN.

Belongs to the bacterial ribosomal protein bL17 family. As to quaternary structure, part of the 50S ribosomal subunit. Contacts protein L32.

The polypeptide is Large ribosomal subunit protein bL17 (Chlamydia abortus (strain DSM 27085 / S26/3) (Chlamydophila abortus)).